Reading from the N-terminus, the 347-residue chain is DNA-directed RNA polymerase subunit alpha (347 aa).

The interval 1–226 (MLISQRPTLS…ELFGLARELN (226 aa)) is alpha N-terminal domain (alpha-NTD). An alpha C-terminal domain (alpha-CTD) region spans residues 241–347 (ADHIASFALP…DQDYAETEQL (107 aa)).

The protein belongs to the RNA polymerase alpha chain family. As to quaternary structure, homodimer. The RNAP catalytic core consists of 2 alpha, 1 beta, 1 beta' and 1 omega subunit. When a sigma factor is associated with the core the holoenzyme is formed, which can initiate transcription.

It carries out the reaction RNA(n) + a ribonucleoside 5'-triphosphate = RNA(n+1) + diphosphate. In terms of biological role, DNA-dependent RNA polymerase catalyzes the transcription of DNA into RNA using the four ribonucleoside triphosphates as substrates. The sequence is that of DNA-directed RNA polymerase subunit alpha from Mycobacterium avium (strain 104).